The sequence spans 229 residues: 5'-methylthioadenosine/S-adenosylhomocysteine nucleosidase (229 aa).

Residue glutamate 12 is the Proton acceptor of the active site. Substrate is bound by residues glycine 78, isoleucine 152, and 173 to 174 (ME). Aspartate 197 serves as the catalytic Proton donor.

Belongs to the PNP/UDP phosphorylase family. MtnN subfamily.

It catalyses the reaction S-adenosyl-L-homocysteine + H2O = S-(5-deoxy-D-ribos-5-yl)-L-homocysteine + adenine. The enzyme catalyses S-methyl-5'-thioadenosine + H2O = 5-(methylsulfanyl)-D-ribose + adenine. It carries out the reaction 5'-deoxyadenosine + H2O = 5-deoxy-D-ribose + adenine. It participates in amino-acid biosynthesis; L-methionine biosynthesis via salvage pathway; S-methyl-5-thio-alpha-D-ribose 1-phosphate from S-methyl-5'-thioadenosine (hydrolase route): step 1/2. Functionally, catalyzes the irreversible cleavage of the glycosidic bond in both 5'-methylthioadenosine (MTA) and S-adenosylhomocysteine (SAH/AdoHcy) to adenine and the corresponding thioribose, 5'-methylthioribose and S-ribosylhomocysteine, respectively. Also cleaves 5'-deoxyadenosine, a toxic by-product of radical S-adenosylmethionine (SAM) enzymes, into 5-deoxyribose and adenine. The sequence is that of 5'-methylthioadenosine/S-adenosylhomocysteine nucleosidase from Baumannia cicadellinicola subsp. Homalodisca coagulata.